A 331-amino-acid polypeptide reads, in one-letter code: 6-phosphogluconolactonase (331 aa).

It belongs to the cycloisomerase 2 family.

It carries out the reaction 6-phospho-D-glucono-1,5-lactone + H2O = 6-phospho-D-gluconate + H(+). Its pathway is carbohydrate degradation; pentose phosphate pathway; D-ribulose 5-phosphate from D-glucose 6-phosphate (oxidative stage): step 2/3. Functionally, catalyzes the hydrolysis of 6-phosphogluconolactone to 6-phosphogluconate. The protein is 6-phosphogluconolactonase of Citrobacter koseri (strain ATCC BAA-895 / CDC 4225-83 / SGSC4696).